Reading from the N-terminus, the 197-residue chain is dCTP deaminase, dUMP-forming (197 aa).

DCTP-binding positions include 105–110, Asp123, 131–133, Gln152, Tyr166, Lys174, and Gln178; these read RSSIGR and TLE. The Proton donor/acceptor role is filled by Glu133. Residues 161–183 form a disordered region; it reads PAERPYGHPSRDSKYIGQTRPQT. Basic and acidic residues predominate over residues 165–174; that stretch reads PYGHPSRDSK.

The protein belongs to the dCTP deaminase family. As to quaternary structure, homotrimer.

It carries out the reaction dCTP + 2 H2O = dUMP + NH4(+) + diphosphate. It participates in pyrimidine metabolism; dUMP biosynthesis; dUMP from dCTP: step 1/1. Its function is as follows. Bifunctional enzyme that catalyzes both the deamination of dCTP to dUTP and the hydrolysis of dUTP to dUMP without releasing the toxic dUTP intermediate. The sequence is that of dCTP deaminase, dUMP-forming from Methanothermobacter thermautotrophicus (strain ATCC 29096 / DSM 1053 / JCM 10044 / NBRC 100330 / Delta H) (Methanobacterium thermoautotrophicum).